The sequence spans 332 residues: UDP-N-acetylenolpyruvoylglucosamine reductase (332 aa).

An FAD-binding PCMH-type domain is found at 55 to 221 (VGGAADLYVA…TQATLQLAPG (167 aa)). R200 is an active-site residue. The active-site Proton donor is S251. Residue E321 is part of the active site.

The protein belongs to the MurB family. Requires FAD as cofactor.

The protein resides in the cytoplasm. It carries out the reaction UDP-N-acetyl-alpha-D-muramate + NADP(+) = UDP-N-acetyl-3-O-(1-carboxyvinyl)-alpha-D-glucosamine + NADPH + H(+). The protein operates within cell wall biogenesis; peptidoglycan biosynthesis. Cell wall formation. This chain is UDP-N-acetylenolpyruvoylglucosamine reductase, found in Nostoc punctiforme (strain ATCC 29133 / PCC 73102).